The following is a 375-amino-acid chain: 23S rRNA (uracil(747)-C(5))-methyltransferase RlmC (375 aa).

4 residues coordinate [4Fe-4S] cluster: cysteine 3, cysteine 11, cysteine 14, and cysteine 87. Residues glutamine 212, phenylalanine 241, glutamate 262, and asparagine 307 each coordinate S-adenosyl-L-methionine. Cysteine 334 (nucleophile) is an active-site residue.

It belongs to the class I-like SAM-binding methyltransferase superfamily. RNA M5U methyltransferase family. RlmC subfamily.

The catalysed reaction is uridine(747) in 23S rRNA + S-adenosyl-L-methionine = 5-methyluridine(747) in 23S rRNA + S-adenosyl-L-homocysteine + H(+). Functionally, catalyzes the formation of 5-methyl-uridine at position 747 (m5U747) in 23S rRNA. The protein is 23S rRNA (uracil(747)-C(5))-methyltransferase RlmC of Shigella boydii serotype 4 (strain Sb227).